We begin with the raw amino-acid sequence, 337 residues long: GDP-mannose transporter 1 (337 aa).

Over 1–16 the chain is Cytoplasmic; sequence MSELKTGHAGHNPWAS. The helical transmembrane segment at 17–37 threads the bilayer; sequence VANSGPISILSYCGSSILMTV. The Lumenal portion of the chain corresponds to 38-51; the sequence is TNKFVVNLKDFNMN. A helical transmembrane segment spans residues 52–72; sequence FVMLFVQSLVCTITLIILRIL. At 73–92 the chain is on the cytoplasmic side; it reads GYAKFRSLNKTDAKNWFPIS. The chain crosses the membrane as a helical span at residues 93 to 113; the sequence is FLLVLMIYTSSKALQYLAVPI. Over 114–119 the chain is Lumenal; it reads YTIFKN. The N-linked (GlcNAc...) asparagine glycan is linked to asparagine 119. Residues 120–140 form a helical membrane-spanning segment; that stretch reads LTIILIAYGEVLFFGGSVTSM. Residues 141–144 lie on the Cytoplasmic side of the membrane; that stretch reads ELSS. A helical membrane pass occupies residues 145–165; sequence FLLMVLSSVVATWGDQQAVAA. Residues 166-180 lie on the Lumenal side of the membrane; it reads KAASLAEGAAGAVAS. A helical membrane pass occupies residues 181 to 201; it reads FNPGYFWMFTNCITSALFVLI. Topologically, residues 202 to 215 are cytoplasmic; it reads MRKRIKLTNFKDFD. Residues 216–236 form a helical membrane-spanning segment; the sequence is TMFYNNVLALPILLLFSFCVE. Over 237–252 the chain is Lumenal; the sequence is DWSSVNLTNNFSNDSL. N-linked (GlcNAc...) asparagine glycosylation is found at asparagine 242, asparagine 246, and asparagine 249. Residues 253-273 form a helical membrane-spanning segment; sequence TAMIISGVASVGISYCSGWCV. The Cytoplasmic segment spans residues 274 to 279; that stretch reads RVTSST. A helical membrane pass occupies residues 280-300; sequence TYSMVGALNKLPIALSGLIFF. At 301-304 the chain is on the lumenal side; it reads DAPR. The chain crosses the membrane as a helical span at residues 305 to 325; sequence NFLSILSIFIGFLSGIIYAVA. At 326–337 the chain is on the cytoplasmic side; sequence KQKKQQAQPLRK.

The protein belongs to the TPT transporter family. SLC35D subfamily. As to quaternary structure, homooligomer.

It localises to the golgi apparatus membrane. The protein resides in the cytoplasmic vesicle membrane. The protein localises to the endoplasmic reticulum membrane. Involved in the import of GDP-mannose from the cytoplasm into the Golgi lumen. Defective copy causes severe glycosylation defect and abnormal retention of soluble endoplasmic reticulum proteins. Involved in vanadate sensitivity. This chain is GDP-mannose transporter 1 (VRG4), found in Saccharomyces cerevisiae (strain YJM789) (Baker's yeast).